A 1088-amino-acid polypeptide reads, in one-letter code: RNA-directed RNA polymerase (1088 aa).

Residues 501 to 687 (LSYGDVTRFL…AKRYIAGGKI (187 aa)) form the RdRp catalytic domain.

This sequence belongs to the reoviridae RNA-directed RNA polymerase family. As to quaternary structure, interacts with VP3 (Potential). Interacts with VP2; this interaction activates VP1. Interacts with NSP5; this interaction is probably necessary for the formation of functional virus factories. Interacts with NSP2; this interaction is weak. Requires Mg(2+) as cofactor.

It is found in the virion. It catalyses the reaction RNA(n) + a ribonucleoside 5'-triphosphate = RNA(n+1) + diphosphate. In terms of biological role, RNA-directed RNA polymerase that is involved in both transcription and genome replication. Together with VP3 capping enzyme, forms an enzyme complex positioned near the channels situated at each of the five-fold vertices of the core. Following infection, the outermost layer of the virus is lost, leaving a double-layered particle (DLP) made up of the core and VP6 shell. VP1 then catalyzes the transcription of fully conservative plus-strand genomic RNAs that are extruded through the DLP's channels into the cytoplasm where they function as mRNAs for translation of viral proteins. One copy of each of the viral (+)RNAs is also recruited during core assembly, together with newly synthesized polymerase complexes and VP2. The polymerase of these novo-formed particles catalyzes the synthesis of complementary minus-strands leading to dsRNA formation. To do so, the polymerase specifically recognizes and binds 4 bases 5'-UGUG-3' in the conserved 3'-sequence of plus-strand RNA templates. VP2 presumably activates the autoinhibited VP1-RNA complex to coordinate packaging and genome replication. Once dsRNA synthesis is complete, the polymerase switches to the transcriptional mode, thus providing secondary transcription. The sequence is that of RNA-directed RNA polymerase from Rotavirus A (strain RVA/SA11-Both/G3P5B[2]) (RV-A).